Reading from the N-terminus, the 909-residue chain is Protein translocase subunit SecA (909 aa).

ATP-binding positions include glutamine 87, 105–109, and aspartate 512; that span reads GEGKT. The interval 863–909 is disordered; the sequence is LVGGGDEDDESIAAHTPMIRDGDKVGRNDPCPCGSGRKYKQCHGKLS. A compositionally biased stretch (basic and acidic residues) spans 880 to 889; sequence MIRDGDKVGR. Positions 893, 895, 904, and 905 each coordinate Zn(2+). Over residues 899–909 the composition is skewed to basic residues; that stretch reads RKYKQCHGKLS.

This sequence belongs to the SecA family. In terms of assembly, monomer and homodimer. Part of the essential Sec protein translocation apparatus which comprises SecA, SecYEG and auxiliary proteins SecDF-YajC and YidC. The cofactor is Zn(2+).

The protein localises to the cell inner membrane. The protein resides in the cytoplasm. The catalysed reaction is ATP + H2O + cellular proteinSide 1 = ADP + phosphate + cellular proteinSide 2.. Functionally, part of the Sec protein translocase complex. Interacts with the SecYEG preprotein conducting channel. Has a central role in coupling the hydrolysis of ATP to the transfer of proteins into and across the cell membrane, serving both as a receptor for the preprotein-SecB complex and as an ATP-driven molecular motor driving the stepwise translocation of polypeptide chains across the membrane. The chain is Protein translocase subunit SecA from Shewanella putrefaciens (strain CN-32 / ATCC BAA-453).